The primary structure comprises 158 residues: 6,7-dimethyl-8-ribityllumazine synthase (158 aa).

5-amino-6-(D-ribitylamino)uracil-binding positions include F22, S57 to E59, and T81 to I83. H89 functions as the Proton donor in the catalytic mechanism. F114 contributes to the 5-amino-6-(D-ribitylamino)uracil binding site. Position 128 (R128) interacts with (2S)-2-hydroxy-3-oxobutyl phosphate.

This sequence belongs to the DMRL synthase family. As to quaternary structure, forms an icosahedral capsid composed of 60 subunits, arranged as a dodecamer of pentamers.

The catalysed reaction is (2S)-2-hydroxy-3-oxobutyl phosphate + 5-amino-6-(D-ribitylamino)uracil = 6,7-dimethyl-8-(1-D-ribityl)lumazine + phosphate + 2 H2O + H(+). It functions in the pathway cofactor biosynthesis; riboflavin biosynthesis; riboflavin from 2-hydroxy-3-oxobutyl phosphate and 5-amino-6-(D-ribitylamino)uracil: step 1/2. Functionally, catalyzes the formation of 6,7-dimethyl-8-ribityllumazine by condensation of 5-amino-6-(D-ribitylamino)uracil with 3,4-dihydroxy-2-butanone 4-phosphate. This is the penultimate step in the biosynthesis of riboflavin. The chain is 6,7-dimethyl-8-ribityllumazine synthase from Blochmanniella pennsylvanica (strain BPEN).